The sequence spans 471 residues: NADH-quinone oxidoreductase subunit N 1 (471 aa).

14 consecutive transmembrane segments (helical) span residues 11 to 31, 39 to 59, 81 to 101, 105 to 125, 127 to 147, 162 to 182, 200 to 220, 234 to 254, 270 to 290, 296 to 316, 324 to 344, 365 to 385, 398 to 418, and 444 to 464; these read ALVP…AGAW, TIHV…ALAA, AIVL…VAGH, TEFV…AGAG, LIML…LAGW, LAGA…FGVA, AAAA…AGAV, PPPV…VAFY, LITA…AFAQ, MLGY…AVAG, ALLL…AVVA, ALAL…AVFV, GLAW…FYYL, and AVAL…GIVL.

This sequence belongs to the complex I subunit 2 family. As to quaternary structure, NDH-1 is composed of 14 different subunits. Subunits NuoA, H, J, K, L, M, N constitute the membrane sector of the complex.

The protein resides in the cell membrane. The catalysed reaction is a quinone + NADH + 5 H(+)(in) = a quinol + NAD(+) + 4 H(+)(out). Its function is as follows. NDH-1 shuttles electrons from NADH, via FMN and iron-sulfur (Fe-S) centers, to quinones in the respiratory chain. The immediate electron acceptor for the enzyme in this species is believed to be a menaquinone. Couples the redox reaction to proton translocation (for every two electrons transferred, four hydrogen ions are translocated across the cytoplasmic membrane), and thus conserves the redox energy in a proton gradient. This chain is NADH-quinone oxidoreductase subunit N 1, found in Streptomyces griseus subsp. griseus (strain JCM 4626 / CBS 651.72 / NBRC 13350 / KCC S-0626 / ISP 5235).